Consider the following 387-residue polypeptide: Protein arginine N-methyltransferase 1 (387 aa).

The tract at residues 1 to 60 (MDQRKGSGSDANGGLAEATASRLRFEDPDEVMEENPAAAAATVGAEEEGGEGGGGEEVIG) is disordered. Residues 34-44 (ENPAAAAATVG) show a composition bias toward low complexity. The region spanning 66–387 (ADYYFDSYSH…VSRTQHYKMR (322 aa)) is the SAM-dependent MTase PRMT-type domain. The S-adenosyl-L-methionine site is built by histidine 79, arginine 88, glycine 112, glutamate 134, and glutamate 163. Residues glutamate 178 and glutamate 187 contribute to the active site.

This sequence belongs to the class I-like SAM-binding methyltransferase superfamily. Protein arginine N-methyltransferase family.

It localises to the nucleus. The catalysed reaction is L-arginyl-[protein] + S-adenosyl-L-methionine = N(omega)-methyl-L-arginyl-[protein] + S-adenosyl-L-homocysteine + H(+). The enzyme catalyses L-arginyl-[protein] + 2 S-adenosyl-L-methionine = N(omega),N(omega)-dimethyl-L-arginyl-[protein] + 2 S-adenosyl-L-homocysteine + 2 H(+). Arginine methyltransferase that methylates (mono and asymmetric dimethylation) the guanidino nitrogens of arginyl residues present in target proteins. This chain is Protein arginine N-methyltransferase 1 (PRMT1), found in Oryza sativa subsp. indica (Rice).